Consider the following 276-residue polypeptide: NH(3)-dependent NAD(+) synthetase (276 aa).

43-50 (GISGGVDS) provides a ligand contact to ATP. Position 49 (Asp-49) interacts with Mg(2+). Arg-146 contributes to the deamido-NAD(+) binding site. Thr-166 lines the ATP pocket. Mg(2+) is bound at residue Glu-171. Residues Lys-179 and Asp-186 each coordinate deamido-NAD(+). Residues Lys-195 and Thr-217 each coordinate ATP. 266–267 (HK) lines the deamido-NAD(+) pocket.

Belongs to the NAD synthetase family. As to quaternary structure, homodimer.

It carries out the reaction deamido-NAD(+) + NH4(+) + ATP = AMP + diphosphate + NAD(+) + H(+). Its pathway is cofactor biosynthesis; NAD(+) biosynthesis; NAD(+) from deamido-NAD(+) (ammonia route): step 1/1. Functionally, catalyzes the ATP-dependent amidation of deamido-NAD to form NAD. Uses ammonia as a nitrogen source. The protein is NH(3)-dependent NAD(+) synthetase of Psychromonas ingrahamii (strain DSM 17664 / CCUG 51855 / 37).